The primary structure comprises 222 residues: MLPHGLIVSCQALPDEPLHSSFIMSKMALAAYEGGAVGIRANTKEDILAIKETVDLPVIGIVKRDYDHSDVFITATSKEVDELIESQCEVIALDATLQQRPKETLDELVSYIRTHAPNVEIMADIATVEEAKNAARLGFDYIGTTLHGYTSYTQGQLLYQNDFQFLKDVLQSVDAKVIAEGNVITPDMYKRVMDLGVHCSVVGGAITRPKEITKRFVQIMED.

This sequence belongs to the NanE family.

The enzyme catalyses an N-acyl-D-glucosamine 6-phosphate = an N-acyl-D-mannosamine 6-phosphate. It functions in the pathway amino-sugar metabolism; N-acetylneuraminate degradation; D-fructose 6-phosphate from N-acetylneuraminate: step 3/5. In terms of biological role, converts N-acetylmannosamine-6-phosphate (ManNAc-6-P) to N-acetylglucosamine-6-phosphate (GlcNAc-6-P). This Staphylococcus aureus (strain USA300) protein is Putative N-acetylmannosamine-6-phosphate 2-epimerase.